Consider the following 218-residue polypeptide: Large ribosomal subunit protein uL3 (218 aa).

The segment at 137-157 (GVGASHGAHKNHRKPGSIGGA) is disordered.

It belongs to the universal ribosomal protein uL3 family. As to quaternary structure, part of the 50S ribosomal subunit. Forms a cluster with proteins L14 and L19.

Functionally, one of the primary rRNA binding proteins, it binds directly near the 3'-end of the 23S rRNA, where it nucleates assembly of the 50S subunit. The protein is Large ribosomal subunit protein uL3 of Kocuria rhizophila (strain ATCC 9341 / DSM 348 / NBRC 103217 / DC2201).